Here is a 1220-residue protein sequence, read N- to C-terminus: Limbin (1220 aa).

Residues 1-29 (MGATGPTGAGGRATWVLAGNILAAALVLG) form the signal peptide. The Extracellular segment spans residues 30-210 (SGPRALPPSF…VLPNHGLHAA (181 aa)). Residues 38–59 (SFPALGPGSPSRPGPAGPWASS) are disordered. Asparagine 100, asparagine 109, and asparagine 130 each carry an N-linked (GlcNAc...) asparagine glycan. Residues 211–231 (GFIAAFLISLLLTVAALFFLA) form a helical membrane-spanning segment. At 232–1220 (RGRCLQGGML…KKANRALGLD (989 aa)) the chain is on the cytoplasmic side. 4 coiled-coil regions span residues 355-404 (EEYE…SAAE), 563-644 (KQKL…AALD), 854-875 (GELLQERVQRLEAQEAHFAESL), and 920-1005 (QILE…VREE).

In terms of assembly, component of the EvC complex composed of EFCAB7, IQCE, EVC2 and EVC; built from two subcomplexes, EVC2:EVC and EFCAB7:IQCE. Interacts with EVC. Interacts (via N-terminal end) with EFCAB7. Interacts (via N-terminal end) with IQCE. In terms of tissue distribution, expressed in long and cranial bones, kidney and heart. Strongly expressed in proliferating chondrocytes, osteoblasts and osteoclasts.

It localises to the cell membrane. It is found in the cytoplasm. The protein resides in the cytoskeleton. The protein localises to the cilium basal body. Its subcellular location is the cell projection. It localises to the cilium. It is found in the cilium membrane. The protein resides in the nucleus. Its function is as follows. Component of the EvC complex that positively regulates ciliary Hedgehog (Hh) signaling. Plays a critical role in bone formation and skeletal development. May be involved in early embryonic morphogenesis. The chain is Limbin (Evc2) from Mus musculus (Mouse).